A 248-amino-acid chain; its full sequence is Triosephosphate isomerase (248 aa).

A substrate-binding site is contributed by 9-11; that stretch reads NWK. The Electrophile role is filled by histidine 94. The active-site Proton acceptor is the glutamate 166. Residues glycine 172, serine 212, and 233-234 each bind substrate; that span reads GG.

Belongs to the triosephosphate isomerase family. In terms of assembly, homodimer.

The protein localises to the cytoplasm. It catalyses the reaction D-glyceraldehyde 3-phosphate = dihydroxyacetone phosphate. It participates in carbohydrate biosynthesis; gluconeogenesis. Its pathway is carbohydrate degradation; glycolysis; D-glyceraldehyde 3-phosphate from glycerone phosphate: step 1/1. Involved in the gluconeogenesis. Catalyzes stereospecifically the conversion of dihydroxyacetone phosphate (DHAP) to D-glyceraldehyde-3-phosphate (G3P). This is Triosephosphate isomerase from Clostridium botulinum (strain Okra / Type B1).